Reading from the N-terminus, the 481-residue chain is Surface lipoprotein assembly modifier 1 (481 aa).

The first 23 residues, 1–23 (MSIQTKFILFLSSSLFLTPYSVA), serve as a signal peptide directing secretion. The segment at 25–192 (EKSPQPHDGR…QYLSALNQRD (168 aa)) is N-terminal domain. The C-terminal probable beta barrel stretch occupies residues 193–481 (QWKIQGGFSF…RIYVEISKTF (289 aa)). 14 beta stranded membrane-spanning segments follow: residues 194 to 204 (WKIQGGFSFLN), 233 to 243 (SYFGNAEKKWS), 248 to 258 (HFTKLSLEGSG), 271 to 281 (NARAGVGLGYQ), 285 to 295 (FELSLMPFTEK), 315 to 325 (SGARLDLSNWL), 329 to 338 (WQISTALEYG), 353 to 363 (YLASATLLYLA), 368 to 377 (YWFGGADYNR), 390 to 400 (KNVRLGWGQEW), 405 to 414 (STRLILNYAR), 432 to 441 (YASVLTIWHR), 448 to 458 (ITPKLSWSYQK), and 471 to 481 (NRIYVEISKTF).

This sequence belongs to the Slam family.

The protein localises to the cell outer membrane. Functionally, required for correct export to the cell surface of some cell outer membrane lipoproteins. The polypeptide is Surface lipoprotein assembly modifier 1 (Haemophilus influenzae (strain ATCC 51907 / DSM 11121 / KW20 / Rd)).